Reading from the N-terminus, the 429-residue chain is Enolase (429 aa).

Residue Gln-167 coordinates (2R)-2-phosphoglycerate. Glu-209 functions as the Proton donor in the catalytic mechanism. Residues Asp-246, Glu-289, and Asp-316 each contribute to the Mg(2+) site. Positions 341, 370, 371, and 392 each coordinate (2R)-2-phosphoglycerate. Lys-341 functions as the Proton acceptor in the catalytic mechanism.

Belongs to the enolase family. As to quaternary structure, component of the RNA degradosome, a multiprotein complex involved in RNA processing and mRNA degradation. The cofactor is Mg(2+).

It is found in the cytoplasm. The protein localises to the secreted. It localises to the cell surface. The enzyme catalyses (2R)-2-phosphoglycerate = phosphoenolpyruvate + H2O. It participates in carbohydrate degradation; glycolysis; pyruvate from D-glyceraldehyde 3-phosphate: step 4/5. Its function is as follows. Catalyzes the reversible conversion of 2-phosphoglycerate (2-PG) into phosphoenolpyruvate (PEP). It is essential for the degradation of carbohydrates via glycolysis. This chain is Enolase, found in Cellvibrio japonicus (strain Ueda107) (Pseudomonas fluorescens subsp. cellulosa).